The primary structure comprises 517 residues: Xylosidase/arabinosidase (517 aa).

The active-site Proton acceptor is D15. The active-site Proton donor is the E185.

The protein belongs to the glycosyl hydrolase 43 family.

The enzyme catalyses Hydrolysis of (1-&gt;4)-beta-D-xylans, to remove successive D-xylose residues from the non-reducing termini.. It catalyses the reaction Hydrolysis of terminal non-reducing alpha-L-arabinofuranoside residues in alpha-L-arabinosides.. Has a 1.6-fold higher activity as an arabinosidase than as a beta-xylosidase when tested on the substrates nitrophenyl-beta-D-xylopyranoside and P-nitrophenyl-alpha-L-arabinofuranoside. This is Xylosidase/arabinosidase (xylB) from Butyrivibrio fibrisolvens.